A 498-amino-acid polypeptide reads, in one-letter code: Angiopoietin-1 (498 aa).

Positions 1 to 15 (MTVFLSFAFLAAILT) are cleaved as a signal peptide. Residues 81-119 (QKLQHLEHVMENYTQWLQKLENYIVENMKSEMAQIQQNA) adopt a coiled-coil conformation. N-linked (GlcNAc...) asparagine glycosylation is found at Asn-92, Asn-122, Asn-154, Asn-243, and Asn-295. Residues 153-261 (LNQTSRLEIQ…LELMDTVHNL (109 aa)) are a coiled coil. Residues 277–497 (REEEKPFRDC…STTMMIRPLD (221 aa)) enclose the Fibrinogen C-terminal domain. Cystine bridges form between Cys-286–Cys-315 and Cys-439–Cys-452.

In terms of assembly, homooligomer. Interacts with TEK/TIE2. Interacts with SVEP1/polydom. Interacts with THBD; this interaction significantly inhibits the generation of activated PC and TAFIa/CPB2 by the thrombin/thrombomodulin complex. In terms of processing, glycosylated.

Its subcellular location is the secreted. Its function is as follows. Binds and activates TEK/TIE2 receptor by inducing its dimerization and tyrosine phosphorylation. Plays an important role in the regulation of angiogenesis, endothelial cell survival, proliferation, migration, adhesion and cell spreading, reorganization of the actin cytoskeleton, but also maintenance of vascular quiescence. Required for normal angiogenesis and heart development during embryogenesis. After birth, activates or inhibits angiogenesis, depending on the context. Inhibits angiogenesis and promotes vascular stability in quiescent vessels, where endothelial cells have tight contacts. In quiescent vessels, ANGPT1 oligomers recruit TEK to cell-cell contacts, forming complexes with TEK molecules from adjoining cells, and this leads to preferential activation of phosphatidylinositol 3-kinase and the AKT1 signaling cascades. In migrating endothelial cells that lack cell-cell adhesions, ANGT1 recruits TEK to contacts with the extracellular matrix, leading to the formation of focal adhesion complexes, activation of PTK2/FAK and of the downstream kinases MAPK1/ERK2 and MAPK3/ERK1, and ultimately to the stimulation of sprouting angiogenesis. Mediates blood vessel maturation/stability. Implicated in endothelial developmental processes later and distinct from that of VEGF. Appears to play a crucial role in mediating reciprocal interactions between the endothelium and surrounding matrix and mesenchyme. This Homo sapiens (Human) protein is Angiopoietin-1 (ANGPT1).